Reading from the N-terminus, the 50-residue chain is Ribosome-inactivating protein lyophyllin (50 aa).

The enzyme catalyses Endohydrolysis of the N-glycosidic bond at one specific adenosine on the 28S rRNA.. Functionally, N-glycosylase that inhibits protein synthesis by depurinating ribosomal rRNA, and thus acts as a ribosomal inactivating protein (RIP). Has adenine polynucleotide glycosidase activity on the poly(A) substrate A30-ssDNA. Inhibits cell-free translation in rabbit reticulocyte lysate system with an IC(50) of 1 nM. May function in the defense response to pathogens. Displays antifungal activity against C.comatus and P.piricola, but not against R.solani, M.arachidicola and C.gossypii. Inhibits mycelial growth in P.piricola with an IC(50) of 2.5 uM. Has cytotoxic activity against the human cancer cell lines Hela, HepG2, and JAR, with IC(50) of 358.8, 489.8, and 926.9 nM respectively. It also inhibits HIV-1 reverse transcriptase activity (IC(50)=7.9 nM) and disrupts mouse embryonic development. This chain is Ribosome-inactivating protein lyophyllin, found in Lyophyllum shimeji (Hon-shimeji).